A 68-amino-acid polypeptide reads, in one-letter code: ATP synthase F(0) complex subunit 8 (68 aa).

Residues 8–24 form a helical membrane-spanning segment; that stretch reads TWLITILSMILTLLIVF. The residue at position 54 (K54) is an N6-acetyllysine; alternate. K54 carries the post-translational modification N6-succinyllysine; alternate. K57 is subject to N6-acetyllysine.

The protein belongs to the ATPase protein 8 family. As to quaternary structure, component of the ATP synthase complex composed at least of ATP5F1A/subunit alpha, ATP5F1B/subunit beta, ATP5MC1/subunit c (homooctomer), MT-ATP6/subunit a, MT-ATP8/subunit 8, ATP5ME/subunit e, ATP5MF/subunit f, ATP5MG/subunit g, ATP5MK/subunit k, ATP5MJ/subunit j, ATP5F1C/subunit gamma, ATP5F1D/subunit delta, ATP5F1E/subunit epsilon, ATP5PF/subunit F6, ATP5PB/subunit b, ATP5PD/subunit d, ATP5PO/subunit OSCP. ATP synthase complex consists of a soluble F(1) head domain (subunits alpha(3) and beta(3)) - the catalytic core - and a membrane F(0) domain - the membrane proton channel (subunits c, a, 8, e, f, g, k and j). These two domains are linked by a central stalk (subunits gamma, delta, and epsilon) rotating inside the F1 region and a stationary peripheral stalk (subunits F6, b, d, and OSCP). Interacts with PRICKLE3.

It localises to the mitochondrion membrane. In terms of biological role, subunit 8, of the mitochondrial membrane ATP synthase complex (F(1)F(0) ATP synthase or Complex V) that produces ATP from ADP in the presence of a proton gradient across the membrane which is generated by electron transport complexes of the respiratory chain. ATP synthase complex consist of a soluble F(1) head domain - the catalytic core - and a membrane F(1) domain - the membrane proton channel. These two domains are linked by a central stalk rotating inside the F(1) region and a stationary peripheral stalk. During catalysis, ATP synthesis in the catalytic domain of F(1) is coupled via a rotary mechanism of the central stalk subunits to proton translocation. In vivo, can only synthesize ATP although its ATP hydrolase activity can be activated artificially in vitro. Part of the complex F(0) domain. The protein is ATP synthase F(0) complex subunit 8 of Lemur catta (Ring-tailed lemur).